We begin with the raw amino-acid sequence, 471 residues long: UDP-N-acetylmuramate--L-alanine ligase (471 aa).

114–120 (GTHGKTT) provides a ligand contact to ATP.

This sequence belongs to the MurCDEF family.

It is found in the cytoplasm. It catalyses the reaction UDP-N-acetyl-alpha-D-muramate + L-alanine + ATP = UDP-N-acetyl-alpha-D-muramoyl-L-alanine + ADP + phosphate + H(+). The protein operates within cell wall biogenesis; peptidoglycan biosynthesis. Cell wall formation. The sequence is that of UDP-N-acetylmuramate--L-alanine ligase from Brucella abortus (strain S19).